Here is a 176-residue protein sequence, read N- to C-terminus: CDP-archaeol synthase (176 aa).

A run of 4 helical transmembrane segments spans residues 41–61, 73–93, 114–134, and 138–158; these read GLIGGIVVGIIFGLMQIFLYN, IITVCALATGALLGDMVKSYF, VVGSLVLMTLALLVTGNLNWF, and FDSVGFLIATIIAILILSPLL.

It belongs to the CDP-archaeol synthase family. The cofactor is Mg(2+).

It localises to the cell membrane. It catalyses the reaction 2,3-bis-O-(geranylgeranyl)-sn-glycerol 1-phosphate + CTP + H(+) = CDP-2,3-bis-O-(geranylgeranyl)-sn-glycerol + diphosphate. It participates in membrane lipid metabolism; glycerophospholipid metabolism. Functionally, catalyzes the formation of CDP-2,3-bis-(O-geranylgeranyl)-sn-glycerol (CDP-archaeol) from 2,3-bis-(O-geranylgeranyl)-sn-glycerol 1-phosphate (DGGGP) and CTP. This reaction is the third ether-bond-formation step in the biosynthesis of archaeal membrane lipids. This chain is CDP-archaeol synthase, found in Methanocorpusculum labreanum (strain ATCC 43576 / DSM 4855 / Z).